Reading from the N-terminus, the 255-residue chain is Pyrroloquinoline-quinone synthase (255 aa).

This sequence belongs to the PqqC family.

The catalysed reaction is 6-(2-amino-2-carboxyethyl)-7,8-dioxo-1,2,3,4,7,8-hexahydroquinoline-2,4-dicarboxylate + 3 O2 = pyrroloquinoline quinone + 2 H2O2 + 2 H2O + H(+). The protein operates within cofactor biosynthesis; pyrroloquinoline quinone biosynthesis. Functionally, ring cyclization and eight-electron oxidation of 3a-(2-amino-2-carboxyethyl)-4,5-dioxo-4,5,6,7,8,9-hexahydroquinoline-7,9-dicarboxylic-acid to PQQ. The protein is Pyrroloquinoline-quinone synthase of Granulibacter bethesdensis (strain ATCC BAA-1260 / CGDNIH1).